The chain runs to 103 residues: Nucleoid-associated protein SUN_2278 (103 aa).

This sequence belongs to the YbaB/EbfC family. As to quaternary structure, homodimer.

It is found in the cytoplasm. The protein resides in the nucleoid. Its function is as follows. Binds to DNA and alters its conformation. May be involved in regulation of gene expression, nucleoid organization and DNA protection. The protein is Nucleoid-associated protein SUN_2278 of Sulfurovum sp. (strain NBC37-1).